We begin with the raw amino-acid sequence, 346 residues long: Immunoglobulin heavy constant alpha (346 aa).

3 consecutive Ig-like domains span residues 6–96, 118–212, and 221–323; these read PSIF…KSVD, PRLS…VSIT, and PQVH…KSID. An intrachain disulfide couples Cys-26 to Cys-83. Asn-134 carries N-linked (GlcNAc...) (complex) asparagine glycosylation. 2 disulfides stabilise this stretch: Cys-139-Cys-196 and Cys-243-Cys-306. An N-linked (GlcNAc...) (complex) asparagine glycan is attached at Asn-333.

As to quaternary structure, immunoglobulins are composed of two identical heavy chains and two identical light chains; disulfide-linked. Monomeric or polymeric. Part of the secretory IgA (sIgA) complex that consists of two, four or five IgA monomers, and two additional non-Ig polypeptides, namely the JCHAIN and the secretory component (the proteolytic product of PIGR). N-glycosylated. N-glycans attached to Asn-134 varies from differentially fucosylated complex and hybrid to sialylated with N-glycoyl neuraminic acid types: GlcNAc2Man3GlcNAc2(Fuc); GlcNAc1Man4GlcNAc2(Fuc); GlcNAc1Man4GlcNAc2; Gal1GlcNAc2Man3GlcNAc2(Fuc); GlcNAc2Man3GlcNAc2; Gal1GlcNAc2Man3GlcNAc2; GlcNAc1Man3GlcNAc2; GlcNAc1Man2GlcNAc2 and NeuGc1Gal1GlcNAc2Man3GlcNAc2(Fuc). N-glycans attached to Asn-333 are mainly fucosylated complex types: GlcNAc2Man3GlcNAc2; GlcNAc1Man3GlcNAc2; GlcNAc1Man3GlcNAc2(Fuc); GlcNAc2Man3GlcNAc2(Fuc); Gal1GlcNAc2Man3GlcNAc2(Fuc); NeuGc1Gal1GlcNAc1Man3GlcNAc2(Fuc); NeuGc1Gal1GlcNAc2Man3GlcNAc2(Fuc) and NeuAc1Gal1GlcNAc2Man3GlcNAc2(Fuc).

It localises to the secreted. The protein localises to the cell membrane. Its function is as follows. Constant region of immunoglobulin heavy chains. Immunoglobulins, also known as antibodies, are membrane-bound or secreted glycoproteins produced by B lymphocytes. In the recognition phase of humoral immunity, the membrane-bound immunoglobulins serve as receptors which, upon binding of a specific antigen, trigger the clonal expansion and differentiation of B lymphocytes into immunoglobulins-secreting plasma cells. Secreted immunoglobulins mediate the effector phase of humoral immunity, which results in the elimination of bound antigens. The antigen binding site is formed by the variable domain of one heavy chain, together with that of its associated light chain. Thus, each immunoglobulin has two antigen binding sites with remarkable affinity for a particular antigen. The variable domains are assembled by a process called V-(D)-J rearrangement and can then be subjected to somatic hypermutations which, after exposure to antigen and selection, allow affinity maturation for a particular antigen. Ig alpha is the major immunoglobulin class in body secretions. In Equus asinus (Donkey), this protein is Immunoglobulin heavy constant alpha (IGHA).